Consider the following 195-residue polypeptide: Imidazoleglycerol-phosphate dehydratase (195 aa).

This sequence belongs to the imidazoleglycerol-phosphate dehydratase family.

It is found in the cytoplasm. It carries out the reaction D-erythro-1-(imidazol-4-yl)glycerol 3-phosphate = 3-(imidazol-4-yl)-2-oxopropyl phosphate + H2O. It functions in the pathway amino-acid biosynthesis; L-histidine biosynthesis; L-histidine from 5-phospho-alpha-D-ribose 1-diphosphate: step 6/9. The protein is Imidazoleglycerol-phosphate dehydratase of Cereibacter sphaeroides (strain ATCC 17023 / DSM 158 / JCM 6121 / CCUG 31486 / LMG 2827 / NBRC 12203 / NCIMB 8253 / ATH 2.4.1.) (Rhodobacter sphaeroides).